The chain runs to 269 residues: MPELPEVEVSRMGITPHMVGQTVTKIIVRNPKLRWPIPEEIQQIEGQVIRKVTRRAKYLLLHTDVGYAIVHLGMSGSLRILPASIPPEKHDHVDLVLSSGEVLRYNDPRRFGAWLWGLPDLDHKVLSQLGPEPLSNDFTAEYLQERAKGKRTAIKQFIMDNKVVVGVGNIYANESLFSAGIHPKRAAGEISPEKIALFVDEIKSVLAFAIEQGGTTLKDFKNADGKPGYFAQELQVYGKGGKPCPRCDNPLSEMKIGQRASVFCSECQK.

P2 functions as the Schiff-base intermediate with DNA in the catalytic mechanism. Residue E3 is the Proton donor of the active site. K57 functions as the Proton donor; for beta-elimination activity in the catalytic mechanism. Residues H90, R109, and K150 each coordinate DNA. An FPG-type zinc finger spans residues 235-269 (QVYGKGGKPCPRCDNPLSEMKIGQRASVFCSECQK). The active-site Proton donor; for delta-elimination activity is the R259.

This sequence belongs to the FPG family. As to quaternary structure, monomer. Zn(2+) is required as a cofactor.

The enzyme catalyses Hydrolysis of DNA containing ring-opened 7-methylguanine residues, releasing 2,6-diamino-4-hydroxy-5-(N-methyl)formamidopyrimidine.. The catalysed reaction is 2'-deoxyribonucleotide-(2'-deoxyribose 5'-phosphate)-2'-deoxyribonucleotide-DNA = a 3'-end 2'-deoxyribonucleotide-(2,3-dehydro-2,3-deoxyribose 5'-phosphate)-DNA + a 5'-end 5'-phospho-2'-deoxyribonucleoside-DNA + H(+). Its function is as follows. Involved in base excision repair of DNA damaged by oxidation or by mutagenic agents. Acts as a DNA glycosylase that recognizes and removes damaged bases. Has a preference for oxidized purines, such as 7,8-dihydro-8-oxoguanine (8-oxoG). Has AP (apurinic/apyrimidinic) lyase activity and introduces nicks in the DNA strand. Cleaves the DNA backbone by beta-delta elimination to generate a single-strand break at the site of the removed base with both 3'- and 5'-phosphates. In Photobacterium profundum (strain SS9), this protein is Formamidopyrimidine-DNA glycosylase.